The sequence spans 681 residues: Cobalamin-dependent radical SAM methyltransferase TokK (681 aa).

The region spanning 1 to 144 is the B12-binding domain; that stretch reads MSAELASRGR…ATRLSDHPDY (144 aa). Residues Asn-18, Ser-72, Tyr-74, Val-75, His-103, Gly-126, and Glu-127 each coordinate cob(II)alamin. The Radical SAM core domain occupies 192–417; sequence RGLRFYALWE…RMYVERPGTP (226 aa). [4Fe-4S] cluster contacts are provided by Cys-206 and Cys-210. Position 212 (Phe-212) interacts with 5'-deoxyadenosine. A [4Fe-4S] cluster-binding site is contributed by Cys-213. Residues Asp-214 and Cys-249 each coordinate cob(II)alamin. Residues Gln-312, Glu-349, and Gly-384 each contribute to the 5'-deoxyadenosine site.

The protein belongs to the methyltransferase superfamily. [4Fe-4S] cluster serves as cofactor. It depends on cob(II)alamin as a cofactor.

It participates in antibiotic biosynthesis. In terms of biological role, methyltransferase involved in the biosynthesis of the beta-lactam carbapenem antibiotic asparenomycin. Catalyzes three consecutive S-adenosyl-L-methionine-dependent methylations to build out the C6-isopropyl side chain in a stereocontrolled manner. This chain is Cobalamin-dependent radical SAM methyltransferase TokK, found in Streptomyces tokunonensis.